A 294-amino-acid chain; its full sequence is ATP phosphoribosyltransferase (294 aa).

Belongs to the ATP phosphoribosyltransferase family. Long subfamily. Mg(2+) serves as cofactor.

The protein localises to the cytoplasm. The enzyme catalyses 1-(5-phospho-beta-D-ribosyl)-ATP + diphosphate = 5-phospho-alpha-D-ribose 1-diphosphate + ATP. Its pathway is amino-acid biosynthesis; L-histidine biosynthesis; L-histidine from 5-phospho-alpha-D-ribose 1-diphosphate: step 1/9. Feedback inhibited by histidine. Functionally, catalyzes the condensation of ATP and 5-phosphoribose 1-diphosphate to form N'-(5'-phosphoribosyl)-ATP (PR-ATP). Has a crucial role in the pathway because the rate of histidine biosynthesis seems to be controlled primarily by regulation of HisG enzymatic activity. This is ATP phosphoribosyltransferase from Pelodictyon phaeoclathratiforme (strain DSM 5477 / BU-1).